A 439-amino-acid chain; its full sequence is Methionine aminopeptidase 2-1 (439 aa).

The segment at 1-87 (MSGGESRSPD…DKLFPSGNFP (87 aa)) is disordered. The segment covering 22–32 (GGDDEESDGDG) has biased composition (acidic residues). Residues 47 to 61 (KKRKKRNKKKSKKKS) are compositionally biased toward basic residues. Histidine 190 lines the substrate pocket. Aspartate 211, aspartate 222, and histidine 291 together coordinate a divalent metal cation. Substrate is bound at residue histidine 299. A divalent metal cation-binding residues include glutamate 324 and glutamate 420.

This sequence belongs to the peptidase M24A family. Methionine aminopeptidase eukaryotic type 2 subfamily. The cofactor is Co(2+). It depends on Zn(2+) as a cofactor. Mn(2+) serves as cofactor. Requires Fe(2+) as cofactor.

It is found in the cytoplasm. It catalyses the reaction Release of N-terminal amino acids, preferentially methionine, from peptides and arylamides.. In terms of biological role, cotranslationally removes the N-terminal methionine from nascent proteins. The N-terminal methionine is often cleaved when the second residue in the primary sequence is small and uncharged (Met-Ala-, Cys, Gly, Pro, Ser, Thr, or Val). In Chaetomium globosum (strain ATCC 6205 / CBS 148.51 / DSM 1962 / NBRC 6347 / NRRL 1970) (Soil fungus), this protein is Methionine aminopeptidase 2-1.